Here is a 358-residue protein sequence, read N- to C-terminus: F-box only protein 25 (358 aa).

Positions 1–83 are interaction with beta-actin; it reads MPFLGQDWRS…NDTNTQSFYR (83 aa). The F-box domain occupies 226–274; the sequence is LTLSDLPLHMLNNILYRFSDGWDIITLGQVTPTLYMLSEDRQLWKKLCQ.

Part of a SCF (SKP1-cullin-F-box) protein ligase complex consisting of FBXO25, SKP1, CUL1 and RBX1. Interacts directly with SKP1 and CUL1. Interacts (via C-terminus) with beta-actin (via N-terminus).

The protein localises to the nucleus. The protein operates within protein modification; protein ubiquitination. Functionally, substrate-recognition component of the SCF (SKP1-CUL1-F-box protein)-type E3 ubiquitin ligase complex. May play a role in accumulation of expanded polyglutamine (polyQ) protein huntingtin (HTT). The chain is F-box only protein 25 (FBXO25) from Macaca fascicularis (Crab-eating macaque).